Consider the following 213-residue polypeptide: tRNA (guanine-N(7)-)-methyltransferase (213 aa).

Residues Glu44, Glu69, Asn96, and Asp118 each contribute to the S-adenosyl-L-methionine site. Residue Asp118 is part of the active site. Lys122 is a binding site for substrate. The segment at 124-129 (RHEKRR) is interaction with RNA. Residues Asp154 and 192 to 195 (TEYE) each bind substrate.

It belongs to the class I-like SAM-binding methyltransferase superfamily. TrmB family.

The catalysed reaction is guanosine(46) in tRNA + S-adenosyl-L-methionine = N(7)-methylguanosine(46) in tRNA + S-adenosyl-L-homocysteine. Its pathway is tRNA modification; N(7)-methylguanine-tRNA biosynthesis. Functionally, catalyzes the formation of N(7)-methylguanine at position 46 (m7G46) in tRNA. The sequence is that of tRNA (guanine-N(7)-)-methyltransferase from Latilactobacillus sakei subsp. sakei (strain 23K) (Lactobacillus sakei subsp. sakei).